The sequence spans 397 residues: Acetate kinase (397 aa).

Asn-8 is a binding site for Mg(2+). An ATP-binding site is contributed by Lys-15. Substrate is bound at residue Arg-89. The active-site Proton donor/acceptor is Asp-146. Residues 206 to 210 (HVGNG), 283 to 285 (DMR), and 331 to 335 (GIGEN) contribute to the ATP site. Mg(2+) is bound at residue Glu-383.

This sequence belongs to the acetokinase family. Homodimer. It depends on Mg(2+) as a cofactor. Requires Mn(2+) as cofactor.

Its subcellular location is the cytoplasm. The enzyme catalyses acetate + ATP = acetyl phosphate + ADP. The protein operates within metabolic intermediate biosynthesis; acetyl-CoA biosynthesis; acetyl-CoA from acetate: step 1/2. Its function is as follows. Catalyzes the formation of acetyl phosphate from acetate and ATP. Can also catalyze the reverse reaction. The sequence is that of Acetate kinase from Streptococcus thermophilus (strain ATCC BAA-491 / LMD-9).